A 425-amino-acid polypeptide reads, in one-letter code: Serine--tRNA ligase (425 aa).

L-serine is bound at residue 231 to 233 (TAE). Residue 262–264 (RRE) participates in ATP binding. Residue E285 participates in L-serine binding. 349–352 (EISS) provides a ligand contact to ATP. S385 provides a ligand contact to L-serine.

It belongs to the class-II aminoacyl-tRNA synthetase family. Type-1 seryl-tRNA synthetase subfamily. In terms of assembly, homodimer. The tRNA molecule binds across the dimer.

It is found in the cytoplasm. The enzyme catalyses tRNA(Ser) + L-serine + ATP = L-seryl-tRNA(Ser) + AMP + diphosphate + H(+). It carries out the reaction tRNA(Sec) + L-serine + ATP = L-seryl-tRNA(Sec) + AMP + diphosphate + H(+). It functions in the pathway aminoacyl-tRNA biosynthesis; selenocysteinyl-tRNA(Sec) biosynthesis; L-seryl-tRNA(Sec) from L-serine and tRNA(Sec): step 1/1. In terms of biological role, catalyzes the attachment of serine to tRNA(Ser). Is also able to aminoacylate tRNA(Sec) with serine, to form the misacylated tRNA L-seryl-tRNA(Sec), which will be further converted into selenocysteinyl-tRNA(Sec). The polypeptide is Serine--tRNA ligase (Aquifex aeolicus (strain VF5)).